Consider the following 287-residue polypeptide: Oxaloacetate decarboxylase (287 aa).

Serine 50 serves as a coordination point for substrate. Mg(2+) is bound at residue aspartate 88. Substrate-binding residues include arginine 159 and histidine 235.

Belongs to the isocitrate lyase/PEP mutase superfamily. Oxaloacetate decarboxylase family. In terms of assembly, homotetramer; dimer of dimers. Requires Mg(2+) as cofactor.

The catalysed reaction is oxaloacetate + H(+) = pyruvate + CO2. Its function is as follows. Catalyzes the decarboxylation of oxaloacetate into pyruvate. Seems to play a role in maintaining cellular concentrations of bicarbonate and pyruvate. In Marinomonas sp. (strain MWYL1), this protein is Oxaloacetate decarboxylase.